Consider the following 189-residue polypeptide: Mercury resistance operon ORF3 (189 aa).

Positions 1 to 27 (MTSPSPTARRTRLRRRTALALAAAATA) form a signal peptide, tat-type signal. Positions 38 to 189 (TKANTPATRA…IQDALKKAGA (152 aa)) constitute a Thioredoxin domain.

Post-translationally, predicted to be exported by the Tat system. The position of the signal peptide cleavage has not been experimentally proven.

It is found in the secreted. In terms of biological role, probable mercury binding protein. The protein is Mercury resistance operon ORF3 of Streptomyces lividans.